The sequence spans 551 residues: Arginine--tRNA ligase (551 aa).

Residues 125 to 135 carry the 'HIGH' region motif; it reads ANPTGPLHIGH.

Belongs to the class-I aminoacyl-tRNA synthetase family. Monomer.

It localises to the cytoplasm. The enzyme catalyses tRNA(Arg) + L-arginine + ATP = L-arginyl-tRNA(Arg) + AMP + diphosphate. This Nitratidesulfovibrio vulgaris (strain DSM 19637 / Miyazaki F) (Desulfovibrio vulgaris) protein is Arginine--tRNA ligase.